The chain runs to 408 residues: CinA-like protein (408 aa).

It belongs to the CinA family.

This is CinA-like protein from Anaeromyxobacter dehalogenans (strain 2CP-1 / ATCC BAA-258).